The sequence spans 79 residues: Endothelin-2 (79 aa).

The interval 1 to 23 (PEQTAPYGLGNPPRRRRRSLPRR) is disordered. The interval 24–39 (CQCSSARDPSCATFCL) is endothelin-like. A disordered region spans residues 51–79 (SRKSPADVFQTGKTGATRGELLQRLRDIS).

Belongs to the endothelin/sarafotoxin family.

Its subcellular location is the secreted. Functionally, endothelins are endothelium-derived vasoconstrictor peptides. This chain is Endothelin-2 (EDN2), found in Macaca fascicularis (Crab-eating macaque).